We begin with the raw amino-acid sequence, 296 residues long: HTH-type transcriptional regulator IlvR (296 aa).

Positions Met-1–Thr-58 constitute an HTH lysR-type domain. The H-T-H motif DNA-binding region spans Phe-18–Gln-37.

The protein belongs to the LysR transcriptional regulatory family.

Positively regulates the expression of the ilvD gene while negatively autoregulating its own expression. In Caulobacter vibrioides (strain ATCC 19089 / CIP 103742 / CB 15) (Caulobacter crescentus), this protein is HTH-type transcriptional regulator IlvR (ilvR).